Reading from the N-terminus, the 107-residue chain is Putative double-stranded DNA mimic protein Asuc_1259 (107 aa).

Belongs to the putative dsDNA mimic protein family.

Its function is as follows. May act as a double-stranded DNA (dsDNA) mimic. Probably regulates the activity of a dsDNA-binding protein. The polypeptide is Putative double-stranded DNA mimic protein Asuc_1259 (Actinobacillus succinogenes (strain ATCC 55618 / DSM 22257 / CCUG 43843 / 130Z)).